A 426-amino-acid polypeptide reads, in one-letter code: Enolase (426 aa).

Position 163 (Q163) interacts with (2R)-2-phosphoglycerate. E205 functions as the Proton donor in the catalytic mechanism. Mg(2+) is bound by residues D242, E283, and D310. Residues K335, R364, S365, and K386 each coordinate (2R)-2-phosphoglycerate. K335 serves as the catalytic Proton acceptor.

The protein belongs to the enolase family. Mg(2+) serves as cofactor.

It localises to the cytoplasm. The protein localises to the secreted. It is found in the cell surface. The enzyme catalyses (2R)-2-phosphoglycerate = phosphoenolpyruvate + H2O. It functions in the pathway carbohydrate degradation; glycolysis; pyruvate from D-glyceraldehyde 3-phosphate: step 4/5. In terms of biological role, catalyzes the reversible conversion of 2-phosphoglycerate (2-PG) into phosphoenolpyruvate (PEP). It is essential for the degradation of carbohydrates via glycolysis. The polypeptide is Enolase (Aquifex aeolicus (strain VF5)).